The chain runs to 419 residues: UDP-N-acetylglucosamine 1-carboxyvinyltransferase (419 aa).

22–23 is a binding site for phosphoenolpyruvate; that stretch reads KN. Position 95 (R95) interacts with UDP-N-acetyl-alpha-D-glucosamine. Residue C119 is the Proton donor of the active site. A 2-(S-cysteinyl)pyruvic acid O-phosphothioketal modification is found at C119. Residues 164–167, D308, and I330 each bind UDP-N-acetyl-alpha-D-glucosamine; that span reads KVSV.

It belongs to the EPSP synthase family. MurA subfamily.

It localises to the cytoplasm. It catalyses the reaction phosphoenolpyruvate + UDP-N-acetyl-alpha-D-glucosamine = UDP-N-acetyl-3-O-(1-carboxyvinyl)-alpha-D-glucosamine + phosphate. It functions in the pathway cell wall biogenesis; peptidoglycan biosynthesis. Cell wall formation. Adds enolpyruvyl to UDP-N-acetylglucosamine. The protein is UDP-N-acetylglucosamine 1-carboxyvinyltransferase of Rickettsia africae (strain ESF-5).